The sequence spans 123 residues: Anti-lipopolysaccharide factor (123 aa).

The first 26 residues, 1 to 26 (MRKGVVAGLCLALVVMCLYLPQPCEA), serve as a signal peptide directing secretion. Residue Asn45 is glycosylated (N-linked (GlcNAc...) asparagine). Cys55 and Cys76 form a disulfide bridge.

In terms of tissue distribution, isoform 1 is highly expressed in muscle and stomach, moderately in heart and gill and at lower levels in hemocytes and hepatopancreas. Isoform 2 is mainly expressed in gill, hepatopancreas, muscle and eyestalk.

Its subcellular location is the secreted. May bind to bacterial LPS and thus specifically inhibit the LPS-mediated activation of the hemolymph coagulation. It has a strong antibacterial effect especially on the growth of Gram-negative bacteria. This Portunus trituberculatus (Swimming crab) protein is Anti-lipopolysaccharide factor.